We begin with the raw amino-acid sequence, 595 residues long: Elongation factor 4 2 (595 aa).

A tr-type G domain is found at S4–Q187. Residues D16–T21 and N133–D136 each bind GTP.

The protein belongs to the TRAFAC class translation factor GTPase superfamily. Classic translation factor GTPase family. LepA subfamily.

The protein localises to the cell membrane. The catalysed reaction is GTP + H2O = GDP + phosphate + H(+). Required for accurate and efficient protein synthesis under certain stress conditions. May act as a fidelity factor of the translation reaction, by catalyzing a one-codon backward translocation of tRNAs on improperly translocated ribosomes. Back-translocation proceeds from a post-translocation (POST) complex to a pre-translocation (PRE) complex, thus giving elongation factor G a second chance to translocate the tRNAs correctly. Binds to ribosomes in a GTP-dependent manner. This chain is Elongation factor 4 2, found in Lactiplantibacillus plantarum (strain ATCC BAA-793 / NCIMB 8826 / WCFS1) (Lactobacillus plantarum).